A 320-amino-acid polypeptide reads, in one-letter code: Beta-ketoacyl-[acyl-carrier-protein] synthase III (320 aa).

Residues Cys114 and His247 contribute to the active site. An ACP-binding region spans residues 248-252; it reads QANRR. Asn277 is a catalytic residue.

Belongs to the thiolase-like superfamily. FabH family. Homodimer.

The protein localises to the cytoplasm. It catalyses the reaction malonyl-[ACP] + acetyl-CoA + H(+) = 3-oxobutanoyl-[ACP] + CO2 + CoA. It functions in the pathway lipid metabolism; fatty acid biosynthesis. Functionally, catalyzes the condensation reaction of fatty acid synthesis by the addition to an acyl acceptor of two carbons from malonyl-ACP. Catalyzes the first condensation reaction which initiates fatty acid synthesis and may therefore play a role in governing the total rate of fatty acid production. Possesses both acetoacetyl-ACP synthase and acetyl transacylase activities. Its substrate specificity determines the biosynthesis of branched-chain and/or straight-chain of fatty acids. The protein is Beta-ketoacyl-[acyl-carrier-protein] synthase III of Neisseria meningitidis serogroup C (strain 053442).